The sequence spans 269 residues: Chymotrypsin-like elastase family member 3B (269 aa).

The first 16 residues, 1–16, serve as a signal peptide directing secretion; it reads MLRLLSSLLLVALASG. Residues 17 to 27 constitute a propeptide, activation peptide; it reads CGQPSHNPSSR. The region spanning 28–267 is the Peptidase S1 domain; the sequence is VVNGEEAVPH…FIDWIEETIA (240 aa). C57 and C73 are disulfide-bonded. Active-site charge relay system residues include H72 and D122. 3 disulfides stabilise this stretch: C156/C222, C187/C203, and C212/C243. S216 (charge relay system) is an active-site residue.

It belongs to the peptidase S1 family. Elastase subfamily.

It catalyses the reaction Preferential cleavage: Ala-|-Xaa. Does not hydrolyze elastin.. Its function is as follows. Efficient protease with alanine specificity but only little elastolytic activity. The chain is Chymotrypsin-like elastase family member 3B (Cela3b) from Mus musculus (Mouse).